Here is a 215-residue protein sequence, read N- to C-terminus: UPF0502 protein YceH (215 aa).

Lys80 is modified (N6-acetyllysine).

Belongs to the UPF0502 family.

This is UPF0502 protein YceH from Shigella boydii serotype 18 (strain CDC 3083-94 / BS512).